The primary structure comprises 221 residues: Immunoregulatory peptides (221 aa).

Residues 1–19 (MNYLCLVVTLVAVAGAISG) form the signal peptide. Residues 20–45 (EKFSDDNTGYQSTPSLRIRTTPGRRR) constitute a propeptide that is removed on maturation. The interval 21-155 (KFSDDNTGYQ…PRTIGPPYTR (135 aa)) is disordered. Residues 25-34 (DNTGYQSTPS) show a composition bias toward polar residues. Residues 48–69 (PRTIGPPYTRRTLRTTTDYSTT) are compositionally biased toward low complexity. Composition is skewed to polar residues over residues 70 to 85 (VENGNLTTPAANSTEK) and 123 to 133 (NGTTPAANSTE). A propeptide spanning residues 191 to 221 (EISWTFGPLYTWRTTKGYGTTLETTNATSTS) is cleaved from the precursor.

As to expression, salivary glands.

The protein resides in the secreted. Suppress host inflammatory response. Exerts significant anti-inflammatory functions, either by directly inhibiting host secretion of inflammatory factors such as tumor necrosis factor-alpha (TNF), monocyte chemotactic protein-1 (CCL2), and interferon-gamma (IFNG) or by indirectly increasing the secretion of immunosuppressant cytokine of interleukin-10 (IL10). Also potently scavenges free radical in vitro in a rapid manner. All tested concentrations of this peptide have little effect on the cell viability. In vivo, inhibits hind paw adjuvant-induced inflammation in mouse in a dose-dependent manner. Its function is as follows. Suppress host inflammatory response. Exerts significant anti-inflammatory functions, either by directly inhibiting host secretion of inflammatory factors such as tumor necrosis factor-alpha (TNF), monocyte chemotactic protein-1 (CCL2), and interferon-gamma (IFNG) or by indirectly increasing the secretion of immunosuppressant cytokine of interleukin-10 (IL10). Also potently scavenges free radical in vitro in a rapid manner. Low concentrations of this peptide have little effect on the cell viability, whereas high concentrations increase the cell viability by 10-20%. In vivo, inhibits hind paw adjuvant-induced inflammation in mouse in a dose-dependent manner. In terms of biological role, not studied but probably similar to Hyalomin-B1. The polypeptide is Immunoregulatory peptides (Hyalomma asiaticum asiaticum (Tick)).